A 429-amino-acid polypeptide reads, in one-letter code: 3-isopropylmalate dehydratase large subunit (429 aa).

[4Fe-4S] cluster is bound by residues Cys303, Cys363, and Cys366.

This sequence belongs to the aconitase/IPM isomerase family. LeuC type 2 subfamily. In terms of assembly, heterodimer of LeuC and LeuD. Requires [4Fe-4S] cluster as cofactor.

The enzyme catalyses (2R,3S)-3-isopropylmalate = (2S)-2-isopropylmalate. Its pathway is amino-acid biosynthesis; L-leucine biosynthesis; L-leucine from 3-methyl-2-oxobutanoate: step 2/4. Its function is as follows. Catalyzes the isomerization between 2-isopropylmalate and 3-isopropylmalate, via the formation of 2-isopropylmaleate. This is 3-isopropylmalate dehydratase large subunit from Caldicellulosiruptor saccharolyticus (strain ATCC 43494 / DSM 8903 / Tp8T 6331).